A 551-amino-acid chain; its full sequence is Glucans biosynthesis protein D (551 aa).

Residues 1-32 (MDRRRFIKGSMAMAAVCGTSGIASLFSQAAFA) constitute a signal peptide (tat-type signal).

This sequence belongs to the OpgD/OpgG family. Post-translationally, predicted to be exported by the Tat system. The position of the signal peptide cleavage has not been experimentally proven.

It is found in the periplasm. It functions in the pathway glycan metabolism; osmoregulated periplasmic glucan (OPG) biosynthesis. Its function is as follows. Probably involved in the control of the structural glucose backbone of osmoregulated periplasmic glucans (OPGs). This chain is Glucans biosynthesis protein D (mdoD), found in Shigella flexneri.